Reading from the N-terminus, the 199-residue chain is Chaperone protein TorD (199 aa).

The protein belongs to the TorD/DmsD family. TorD subfamily.

The protein localises to the cytoplasm. Involved in the biogenesis of TorA. Acts on TorA before the insertion of the molybdenum cofactor and, as a result, probably favors a conformation of the apoenzyme that is competent for acquiring the cofactor. The sequence is that of Chaperone protein TorD from Shigella boydii serotype 18 (strain CDC 3083-94 / BS512).